The chain runs to 285 residues: Nucleotide-binding protein Gmet_1286 (285 aa).

8–15 (GLSGSGKS) provides a ligand contact to ATP. 59-62 (DIRG) contacts GTP.

Belongs to the RapZ-like family.

In terms of biological role, displays ATPase and GTPase activities. The protein is Nucleotide-binding protein Gmet_1286 of Geobacter metallireducens (strain ATCC 53774 / DSM 7210 / GS-15).